A 301-amino-acid chain; its full sequence is Large ribosomal subunit protein uL18 (301 aa).

Over residues 257-271 the composition is skewed to basic and acidic residues; sequence NPERVKSTKKNDKPK. The interval 257-283 is disordered; the sequence is NPERVKSTKKNDKPKRDHKKFYPTKLT.

This sequence belongs to the universal ribosomal protein uL18 family. Component of the large ribosomal subunit (LSU).

Its subcellular location is the cytoplasm. It localises to the nucleus. In terms of biological role, component of the ribosome, a large ribonucleoprotein complex responsible for the synthesis of proteins in the cell. The small ribosomal subunit (SSU) binds messenger RNAs (mRNAs) and translates the encoded message by selecting cognate aminoacyl-transfer RNA (tRNA) molecules. The large subunit (LSU) contains the ribosomal catalytic site termed the peptidyl transferase center (PTC), which catalyzes the formation of peptide bonds, thereby polymerizing the amino acids delivered by tRNAs into a polypeptide chain. The nascent polypeptides leave the ribosome through a tunnel in the LSU and interact with protein factors that function in enzymatic processing, targeting, and the membrane insertion of nascent chains at the exit of the ribosomal tunnel. The chain is Large ribosomal subunit protein uL18 (RPL5) from Tetrahymena thermophila (strain SB210).